A 251-amino-acid polypeptide reads, in one-letter code: CCN family member 5 (251 aa).

A signal peptide spans 1–23 (MRGNPLIHLLAISFLCILSMVYS). Residues 24–103 (QLCPAPCACP…EEDDGSCEVN (80 aa)) form the IGFBP N-terminal domain. 6 cysteine pairs are disulfide-bonded: Cys-26–Cys-50, Cys-30–Cys-52, Cys-32–Cys-53, Cys-39–Cys-56, Cys-64–Cys-78, and Cys-70–Cys-100. The VWFC domain maps to 98 to 164 (GSCEVNGRRY…GRCCPEWVCD (67 aa)). Positions 195-239 (CPNWSTAWGPCSTTCGLGIATRVSNQNRFCQLEIQRRLCLSRPCL) constitute a TSP type-1 domain. Asn-197 is a glycosylation site (N-linked (GlcNAc...) asparagine).

Belongs to the CCN family.

It is found in the secreted. Functionally, may play an important role in modulating bone turnover. Promotes the adhesion of osteoblast cells and inhibits the binding of fibrinogen to integrin receptors. In addition, inhibits osteocalcin production. This is CCN family member 5 (Ccn5) from Mus musculus (Mouse).